Here is a 315-residue protein sequence, read N- to C-terminus: tRNA pseudouridine synthase B (315 aa).

Asp-47 functions as the Nucleophile in the catalytic mechanism.

The protein belongs to the pseudouridine synthase TruB family. Type 1 subfamily.

It catalyses the reaction uridine(55) in tRNA = pseudouridine(55) in tRNA. Functionally, responsible for synthesis of pseudouridine from uracil-55 in the psi GC loop of transfer RNAs. The sequence is that of tRNA pseudouridine synthase B from Shewanella amazonensis (strain ATCC BAA-1098 / SB2B).